The sequence spans 588 residues: Sperm-associated microtubule inner protein 4 (588 aa).

A Phosphothreonine modification is found at Thr219. Phosphoserine is present on residues Ser224, Ser406, Ser421, Ser427, and Ser437. Tyr441 bears the Phosphotyrosine mark. Phosphoserine occurs at positions 457 and 484. A Phosphothreonine modification is found at Thr512. Ser516 carries the phosphoserine modification. Lys543 is covalently cross-linked (Glycyl lysine isopeptide (Lys-Gly) (interchain with G-Cter in SUMO2)). Phosphoserine is present on Ser545.

The protein resides in the cytoplasm. It localises to the cytoskeleton. It is found in the microtubule organizing center. The protein localises to the centrosome. Its subcellular location is the flagellum axoneme. In terms of biological role, microtubule inner protein (MIP) part of the dynein-decorated doublet microtubules (DMTs) in flagellum axoneme. May serve to reinforce and thus stabilize the microtubule structure in the sperm flagella. The chain is Sperm-associated microtubule inner protein 4 (Spmip4) from Rattus norvegicus (Rat).